A 536-amino-acid chain; its full sequence is Coilin (536 aa).

Residues 96-316 (AETCNDGAQN…QHSQSPTSDS (221 aa)) form a disordered region. The span at 171-180 (KTHKGKRTKK) shows a compositional bias: basic residues. Residues 181 to 192 (KSEAPIENPPDK) are compositionally biased toward basic and acidic residues. Over residues 213–238 (QTSSSDSSDTSSCSDQPTPTTQQKPQ) the composition is skewed to low complexity. Polar residues-rich tracts occupy residues 239-257 (SSAK…THSV) and 303-316 (THIQ…TSDS). Tandem repeats lie at residues 353 to 358 (RGRGRG) and 380 to 385 (RGRGRG). Residues 353–385 (RGRGRGEDFSWRGQRGRWFRGQGNNSNRGRGRG) are 2 X 6 AA repeats of R-G-R-G-R-G. Residues 368 to 387 (GRWFRGQGNNSNRGRGRGDS) form a disordered region. Residues 371–380 (FRGQGNNSNR) are compositionally biased toward low complexity. Positions 425-523 (DYSSLPLLAA…VMLNWNTLIE (99 aa)) constitute a Tudor; atypical domain.

The protein belongs to the coilin family. Expressed in both oocytes and somatic cells.

It is found in the nucleus. This Xenopus laevis (African clawed frog) protein is Coilin (coil).